The primary structure comprises 116 residues: Ribosome-binding factor A (116 aa).

It belongs to the RbfA family. In terms of assembly, monomer. Binds 30S ribosomal subunits, but not 50S ribosomal subunits or 70S ribosomes.

Its subcellular location is the cytoplasm. Functionally, one of several proteins that assist in the late maturation steps of the functional core of the 30S ribosomal subunit. Associates with free 30S ribosomal subunits (but not with 30S subunits that are part of 70S ribosomes or polysomes). Required for efficient processing of 16S rRNA. May interact with the 5'-terminal helix region of 16S rRNA. The polypeptide is Ribosome-binding factor A (Malacoplasma penetrans (strain HF-2) (Mycoplasma penetrans)).